The sequence spans 508 residues: Pentatricopeptide repeat-containing protein At3g04130, mitochondrial (508 aa).

Residues 1-74 constitute a mitochondrion transit peptide; the sequence is MSWLIQNRIG…DSEDDVFKRL (74 aa). PPR repeat units lie at residues 120–150, 154–188, 189–219, 223–257, 258–292, 293–327, 328–363, 364–398, 400–434, and 436–470; these read SSDA…MRGD, TLNT…GLEK, NTES…LKSH, NAHT…GFRP, CVIS…GSPP, NSIT…GCKP, DSLF…GVSI, NTST…NLCN, DVHT…HHLS, and DEST…DITP.

The protein belongs to the PPR family. P subfamily.

It localises to the mitochondrion. The protein is Pentatricopeptide repeat-containing protein At3g04130, mitochondrial of Arabidopsis thaliana (Mouse-ear cress).